The following is a 307-amino-acid chain: Protein EI24 homolog (307 aa).

Helical transmembrane passes span Phe53 to Tyr73 and Met92 to Ala112. Asn135 carries an N-linked (GlcNAc...) asparagine glycan. Helical transmembrane passes span Leu153–Ile173, Phe175–Gly195, Phe225–Ile245, and Gly260–Leu280.

The protein belongs to the EI24 family.

It localises to the membrane. In Dictyostelium discoideum (Social amoeba), this protein is Protein EI24 homolog.